Reading from the N-terminus, the 779-residue chain is Cysteine-rich protein 2-binding protein (779 aa).

Residues M1 to G34 are disordered. S4 is modified (phosphoserine). K230 is modified (N6-acetyllysine). Disordered stretches follow at residues S247–F292, L314–T345, and P360–Y457. A compositionally biased stretch (basic and acidic residues) spans M255–K275. S284 is modified (phosphoserine). At K291 the chain carries N6-acetyllysine. Over residues L314–S334 the composition is skewed to low complexity. Composition is skewed to basic and acidic residues over residues R402 to G423 and K443 to P452. The residue at position 413 (S413) is a Phosphoserine. The 145-residue stretch at L635 to R779 folds into the N-acetyltransferase domain.

In terms of assembly, interacts with the LIM 1 domain of CSRP2. Component of the ADA2A-containing complex (ATAC), composed of CSRP2BP, KAT2A, TADA2L, TADA3L, ZZ3, MBIP, WDR5, YEATS2, CCDC101 and DR1. In the complex, it probably interacts directly with KAT2A, MBIP and WDR5.

It localises to the nucleus. It is found in the cytoplasm. Functionally, component of the ATAC complex, a complex with histone acetyltransferase activity on histones H3 and H4. May function as a scaffold for the ATAC complex to promote ATAC complex stability. Has also weak histone acetyltransferase activity toward histone H4. Required for the normal progression through G1 and G2/M phases of the cell cycle. The chain is Cysteine-rich protein 2-binding protein from Mus musculus (Mouse).